Here is a 494-residue protein sequence, read N- to C-terminus: 4-trimethylaminobutyraldehyde dehydrogenase (494 aa).

N-acetylserine is present on Ser-2. Position 30 is an N6-acetyllysine; alternate (Lys-30). The residue at position 30 (Lys-30) is an N6-succinyllysine; alternate. The residue at position 59 (Lys-59) is an N6-succinyllysine. NAD(+) is bound by residues Lys-180 and 232-236 (GSVPT). Glu-254 functions as the Proton acceptor in the catalytic mechanism. The active-site Nucleophile is the Cys-288. An N6-acetyllysine mark is found at Lys-298 and Lys-344. Glu-391 is an NAD(+) binding site.

The protein belongs to the aldehyde dehydrogenase family. Homotetramer.

The protein resides in the cytoplasm. It localises to the cytosol. It catalyses the reaction 4-(trimethylamino)butanal + NAD(+) + H2O = 4-(trimethylamino)butanoate + NADH + 2 H(+). It carries out the reaction an aldehyde + NAD(+) + H2O = a carboxylate + NADH + 2 H(+). The catalysed reaction is 4-aminobutanal + NAD(+) + H2O = 4-aminobutanoate + NADH + 2 H(+). The enzyme catalyses formaldehyde + NAD(+) + H2O = formate + NADH + 2 H(+). It catalyses the reaction acetaldehyde + NAD(+) + H2O = acetate + NADH + 2 H(+). It carries out the reaction imidazole-4-acetaldehyde + NAD(+) + H2O = imidazole-4-acetate + NADH + 2 H(+). The catalysed reaction is acrolein + NAD(+) + H2O = acrylate + NADH + 2 H(+). The enzyme catalyses (5-hydroxyindol-3-yl)acetaldehyde + NAD(+) + H2O = (5-hydroxyindol-3-yl)acetate + NADH + 2 H(+). It catalyses the reaction 3,4-dihydroxyphenylacetaldehyde + NAD(+) + H2O = 3,4-dihydroxyphenylacetate + NADH + 2 H(+). It carries out the reaction spermine monoaldehyde + NAD(+) + H2O = N-(2-carboxyethyl)spermidine + NADH + 2 H(+). The catalysed reaction is propanal + NAD(+) + H2O = propanoate + NADH + 2 H(+). The enzyme catalyses butanal + NAD(+) + H2O = butanoate + NADH + 2 H(+). It catalyses the reaction pentanal + NAD(+) + H2O = pentanoate + NADH + 2 H(+). It carries out the reaction hexanal + NAD(+) + H2O = hexanoate + NADH + 2 H(+). It participates in amine and polyamine biosynthesis; carnitine biosynthesis. In terms of biological role, converts gamma-trimethylaminobutyraldehyde into gamma-butyrobetaine with high efficiency (in vitro). Can catalyze the irreversible oxidation of a broad range of aldehydes to the corresponding acids in an NAD-dependent reaction, but with low efficiency. Catalyzes the oxidation of aldehydes arising from biogenic amines and polyamines. The sequence is that of 4-trimethylaminobutyraldehyde dehydrogenase (ALDH9A1) from Bos taurus (Bovine).